The sequence spans 209 residues: Large ribosomal subunit protein uL3 (209 aa).

N5-methylglutamine is present on glutamine 150.

The protein belongs to the universal ribosomal protein uL3 family. In terms of assembly, part of the 50S ribosomal subunit. Forms a cluster with proteins L14 and L19. Methylated by PrmB.

In terms of biological role, one of the primary rRNA binding proteins, it binds directly near the 3'-end of the 23S rRNA, where it nucleates assembly of the 50S subunit. The polypeptide is Large ribosomal subunit protein uL3 (Photobacterium profundum (strain SS9)).